Here is a 379-residue protein sequence, read N- to C-terminus: Trans-prenyltransferase abpB (379 aa).

Substrate contacts are provided by residues 90–91, R112, K197, R264, K266, Y268, and Y338; that span reads RL.

This sequence belongs to the tryptophan dimethylallyltransferase family.

The enzyme catalyses aspulvinone E + 2 dimethylallyl diphosphate = aspulvinone H + 2 diphosphate. It carries out the reaction butyrolactone II + dimethylallyl diphosphate = butyrolactone I + diphosphate. It functions in the pathway secondary metabolite biosynthesis. Functionally, trans-prenyltransferase that acts in both the aspulvinones and butyrolactones pathways. Prenylates aspulvinone E and butyrolactone II to yield repectively aspulvinone H and butyrolactone I. The protein is Trans-prenyltransferase abpB of Aspergillus terreus (strain NIH 2624 / FGSC A1156).